The chain runs to 600 residues: Aspartate--tRNA(Asp/Asn) ligase (600 aa).

Residue Glu-187 participates in L-aspartate binding. The tract at residues 211–214 (QIFK) is aspartate. Residues Arg-233 and His-463 each coordinate L-aspartate. 233-235 (RDE) lines the ATP pocket. Glu-497 is a binding site for ATP. Position 504 (Arg-504) interacts with L-aspartate. ATP is bound at residue 549–552 (GVDR).

The protein belongs to the class-II aminoacyl-tRNA synthetase family. Type 1 subfamily. As to quaternary structure, homodimer.

It is found in the cytoplasm. The catalysed reaction is tRNA(Asx) + L-aspartate + ATP = L-aspartyl-tRNA(Asx) + AMP + diphosphate. Aspartyl-tRNA synthetase with relaxed tRNA specificity since it is able to aspartylate not only its cognate tRNA(Asp) but also tRNA(Asn). Reaction proceeds in two steps: L-aspartate is first activated by ATP to form Asp-AMP and then transferred to the acceptor end of tRNA(Asp/Asn). This is Aspartate--tRNA(Asp/Asn) ligase from Wolbachia pipientis wMel.